The primary structure comprises 226 residues: 3-dehydroquinate dehydratase (226 aa).

3-dehydroquinate-binding positions include serine 9, 32-34, and arginine 59; that span reads EVR. The Proton donor/acceptor role is filled by histidine 119. Lysine 146 acts as the Schiff-base intermediate with substrate in catalysis. 3-dehydroquinate contacts are provided by arginine 187, threonine 208, and glutamine 212.

Belongs to the type-I 3-dehydroquinase family. Homodimer.

The catalysed reaction is 3-dehydroquinate = 3-dehydroshikimate + H2O. It participates in metabolic intermediate biosynthesis; chorismate biosynthesis; chorismate from D-erythrose 4-phosphate and phosphoenolpyruvate: step 3/7. Involved in the third step of the chorismate pathway, which leads to the biosynthesis of aromatic amino acids. Catalyzes the cis-dehydration of 3-dehydroquinate (DHQ) and introduces the first double bond of the aromatic ring to yield 3-dehydroshikimate. This Desulfotalea psychrophila (strain LSv54 / DSM 12343) protein is 3-dehydroquinate dehydratase.